The chain runs to 107 residues: uncharacterized protein (107 aa).

The disordered stretch occupies residues 87–107; the sequence is KNRNGPKAEKRRPYVRAHAKW.

This is an uncharacterized protein from Saccharomyces cerevisiae (strain ATCC 204508 / S288c) (Baker's yeast).